The primary structure comprises 451 residues: Photosystem II CP43 reaction center protein (451 aa).

The Cytoplasmic segment spans residues 1–46 (ATNRDQESSGFAWWAGNARLINLSGKLLGAHVAHAGLIVFWAGAMT). 3 residues coordinate chlorophyll a: tryptophan 13, leucine 27, and alanine 30. Residues 47-71 (LFELAHFIPEKPMYEQGLILIPHIA) traverse the membrane as a helical segment. Topologically, residues 72-111 (TLGWGVGPGGEVVDTFPFFVVGVVHLISSAVLGFGGVYHA) are lumenal. 2 residues coordinate chlorophyll a: valine 92 and glycine 106. The chain crosses the membrane as a helical span at residues 112–133 (IRGPETLEEYSSFFGYDWKDKN). The Cytoplasmic segment spans residues 134 to 155 (KMTTILGFHLIVLGIGALLLVA). A chlorophyll a-binding site is contributed by isoleucine 138. Residues 156–178 (KAMFFGGLYDTWAPGGGDVRVIT) form a helical membrane-spanning segment. Residues 179 to 232 (NPTLDPRVIFGYLLKSPFGGEGWIVSVNNLEDVVGGHIWIGLICIAGGIWHILT) lie on the Lumenal side of the membrane. 2 residues coordinate chlorophyll a: valine 211 and glycine 225. Residues 233-253 (TPFGWARRAFIWSGEAYLSYS) traverse the membrane as a helical segment. The Cytoplasmic segment spans residues 254–268 (LGALSMMGFIATCFV). The helical transmembrane segment at 269-290 (WFNNTVYPSEFYGPTGPEASQA) threads the bilayer. Residues 291-424 (QAMTFLIRDQ…FLVGHLWHAG (134 aa)) are Lumenal-facing. Glutamate 345 is a binding site for [CaMn4O5] cluster. Chlorophyll a is bound by residues leucine 404, phenylalanine 415, and glycine 418. Residues 425-449 (RARAAAAGFEKGIDRESEPVLSMPS) traverse the membrane as a helical segment. Residues 450-451 (LD) lie on the Cytoplasmic side of the membrane.

This sequence belongs to the PsbB/PsbC family. PsbC subfamily. In terms of assembly, PSII is composed of 1 copy each of membrane proteins PsbA, PsbB, PsbC, PsbD, PsbE, PsbF, PsbH, PsbI, PsbJ, PsbK, PsbL, PsbM, PsbT, PsbX, PsbY, PsbZ, Psb30/Ycf12, peripheral proteins PsbO, CyanoQ (PsbQ), PsbU, PsbV and a large number of cofactors. It forms dimeric complexes. Binds multiple chlorophylls and provides some of the ligands for the Ca-4Mn-5O cluster of the oxygen-evolving complex. It may also provide a ligand for a Cl- that is required for oxygen evolution. PSII binds additional chlorophylls, carotenoids and specific lipids. serves as cofactor.

It is found in the cellular thylakoid membrane. Functionally, one of the components of the core complex of photosystem II (PSII). It binds chlorophyll and helps catalyze the primary light-induced photochemical processes of PSII. PSII is a light-driven water:plastoquinone oxidoreductase, using light energy to abstract electrons from H(2)O, generating O(2) and a proton gradient subsequently used for ATP formation. The protein is Photosystem II CP43 reaction center protein of Thermostichus vulcanus (Synechococcus vulcanus).